The chain runs to 281 residues: Nucleoid occlusion protein (281 aa).

The H-T-H motif DNA-binding region spans 145–164 (EALAQRLGKGQSTIANKLRL).

Belongs to the ParB family.

Its subcellular location is the cytoplasm. It localises to the nucleoid. Its function is as follows. Effects nucleoid occlusion by binding relatively nonspecifically to DNA and preventing the assembly of the division machinery in the vicinity of the nucleoid, especially under conditions that disturb the cell cycle. It helps to coordinate cell division and chromosome segregation by preventing the formation of the Z ring through the nucleoid, which would cause chromosome breakage. This Geobacillus sp. (strain WCH70) protein is Nucleoid occlusion protein.